Here is a 119-residue protein sequence, read N- to C-terminus: Large ribosomal subunit protein bL20 (119 aa).

Belongs to the bacterial ribosomal protein bL20 family.

Its function is as follows. Binds directly to 23S ribosomal RNA and is necessary for the in vitro assembly process of the 50S ribosomal subunit. It is not involved in the protein synthesizing functions of that subunit. In Rhodopseudomonas palustris (strain BisA53), this protein is Large ribosomal subunit protein bL20.